Reading from the N-terminus, the 569-residue chain is Tetratricopeptide repeat protein 22 (569 aa).

TPR repeat units lie at residues 66–99 (PAVR…HPGN), 101–133 (NAWA…MGLA), 203–237 (ATLY…LRQV), 260–294 (KDTF…AKNQ), 295–328 (PPIL…LRDP), 383–418 (FKAY…ALVF), and 432–465 (PELQ…DDAG).

This is Tetratricopeptide repeat protein 22 (TTC22) from Homo sapiens (Human).